A 511-amino-acid chain; its full sequence is Bifunctional purine biosynthesis protein PurH (511 aa).

The MGS-like domain maps to 1 to 147; that stretch reads MIQIKRALIS…KNYKHTLVLT (147 aa).

The protein belongs to the PurH family.

The enzyme catalyses (6R)-10-formyltetrahydrofolate + 5-amino-1-(5-phospho-beta-D-ribosyl)imidazole-4-carboxamide = 5-formamido-1-(5-phospho-D-ribosyl)imidazole-4-carboxamide + (6S)-5,6,7,8-tetrahydrofolate. The catalysed reaction is IMP + H2O = 5-formamido-1-(5-phospho-D-ribosyl)imidazole-4-carboxamide. Its pathway is purine metabolism; IMP biosynthesis via de novo pathway; 5-formamido-1-(5-phospho-D-ribosyl)imidazole-4-carboxamide from 5-amino-1-(5-phospho-D-ribosyl)imidazole-4-carboxamide (10-formyl THF route): step 1/1. It participates in purine metabolism; IMP biosynthesis via de novo pathway; IMP from 5-formamido-1-(5-phospho-D-ribosyl)imidazole-4-carboxamide: step 1/1. The polypeptide is Bifunctional purine biosynthesis protein PurH (Leptospira interrogans serogroup Icterohaemorrhagiae serovar Lai (strain 56601)).